Reading from the N-terminus, the 179-residue chain is Large ribosomal subunit protein uL5 (179 aa).

This sequence belongs to the universal ribosomal protein uL5 family. As to quaternary structure, part of the 50S ribosomal subunit; part of the 5S rRNA/L5/L18/L25 subcomplex. Contacts the 5S rRNA and the P site tRNA. Forms a bridge to the 30S subunit in the 70S ribosome.

Functionally, this is one of the proteins that bind and probably mediate the attachment of the 5S RNA into the large ribosomal subunit, where it forms part of the central protuberance. In the 70S ribosome it contacts protein S13 of the 30S subunit (bridge B1b), connecting the 2 subunits; this bridge is implicated in subunit movement. Contacts the P site tRNA; the 5S rRNA and some of its associated proteins might help stabilize positioning of ribosome-bound tRNAs. The polypeptide is Large ribosomal subunit protein uL5 (Verminephrobacter eiseniae (strain EF01-2)).